We begin with the raw amino-acid sequence, 253 residues long: Demethylmenaquinone methyltransferase (253 aa).

Residues Thr-75, Asp-96, and 124–125 (DA) each bind S-adenosyl-L-methionine.

The protein belongs to the class I-like SAM-binding methyltransferase superfamily. MenG/UbiE family.

It carries out the reaction a 2-demethylmenaquinol + S-adenosyl-L-methionine = a menaquinol + S-adenosyl-L-homocysteine + H(+). It functions in the pathway quinol/quinone metabolism; menaquinone biosynthesis; menaquinol from 1,4-dihydroxy-2-naphthoate: step 2/2. Methyltransferase required for the conversion of demethylmenaquinol (DMKH2) to menaquinol (MKH2). This is Demethylmenaquinone methyltransferase from Desulfitobacterium hafniense (strain Y51).